The sequence spans 546 residues: Phosphatidylinositol 4-phosphate 5-kinase type-1 alpha (546 aa).

The PIPK domain maps to 65–433 (TSSALKGAIQ…RFQRFMCNTV (369 aa)). Lysine 87 participates in a covalent cross-link: Glycyl lysine isopeptide (Lys-Gly) (interchain with G-Cter in ubiquitin). Positions 441–522 (PSPTKKFRSG…PGPSFSPAVG (82 aa)) are disordered. Low complexity predominate over residues 449–461 (SGPSFSRRSGPSG). The span at 462–471 (NSCTPSQPTA) shows a compositional bias: polar residues. Over residues 473–493 (GEHKAQVTTKAEVEPDIHLGR) the composition is skewed to basic and acidic residues.

In terms of assembly, interacts with RAC1. Interacts with TUT1. Forms a complex with CDH1/E-cadherin, CTNNB1/beta-catenin and CTNND1 at the plasma membrane upon calcium stimulation. Found in a ternary complex with IRS1 and DGKZ in the absence of insulin stimulation. Interacts with DGKZ. Interacts with PIP4K2C; the interaction inhibits PIP5K1A kinase activity.

It localises to the cell membrane. The protein localises to the cytoplasm. It is found in the nucleus. The protein resides in the nucleus speckle. Its subcellular location is the cell projection. It localises to the ruffle. The protein localises to the lamellipodium. It carries out the reaction a 1,2-diacyl-sn-glycero-3-phospho-(1D-myo-inositol 4-phosphate) + ATP = a 1,2-diacyl-sn-glycero-3-phospho-(1D-myo-inositol-4,5-bisphosphate) + ADP + H(+). The catalysed reaction is 1-octadecanoyl-2-(5Z,8Z,11Z,14Z)-eicosatetraenoyl-sn-glycero-3-phospho-1D-myo-inositol 4-phosphate + ATP = 1-octadecanoyl-2-(5Z,8Z,11Z,14Z)-eicosatetraenoyl-sn-glycero-3-phospho-1D-myo-inositol 4,5-bisphosphate + ADP + H(+). It catalyses the reaction 1,2-dihexadecanoyl-sn-glycero-3-phospho-(1D-myo-inositol-4-phosphate) + ATP = 1,2-dihexadecanoyl-sn-glycero-3-phospho-(1D-myo-inositol-4,5-bisphosphate) + ADP + H(+). The enzyme catalyses 1-octadecanoyl-2-(9Z)-octadecenoyl-sn-glycero-3-phospho-1D-myo-inositol 4-phosphate + ATP = 1-octadecanoyl-2-(9Z)-octadecenoyl-sn-glycero-3-phospho-1D-myo-inositol 4,5-bisphosphate + ADP + H(+). It carries out the reaction 1-octadecanoyl-2-(9Z)-octadecenoyl-sn-glycero-3-phospho-1D-myo-inositol + ATP = 1-octadecanoyl-2-(9Z)-octadecenoyl-sn-glycero-3-phospho-1D-myo-inositol 5-phosphate + ADP + H(+). The catalysed reaction is 1-octadecanoyl-2-(9Z,12Z)-octadecadienoyl-sn-glycero-3-phospho-1D-myo-inositol + ATP = 1-octadecanoyl-2-(9Z,12Z)-octadecadienoyl-sn-glycero-3-phospho-1D-myo-inositol 5-phosphate + ADP + H(+). It catalyses the reaction 1-octadecanoyl-2-(5Z,8Z,11Z,14Z-eicosatetraenoyl)-sn-glycero-3-phospho-(1D-myo-inositol) + ATP = 1-octadecanoyl-2-(5Z,8Z,11Z,14Z)-eicosatetraenoyl-sn-glycero-3-phospho-1D-myo-inositol 5-phosphate + ADP + H(+). The enzyme catalyses 1,2-di-(9Z,12Z)-octadecadienoyl-sn-glycero-3-phospho-1D-myo-inositol + ATP = 1,2-di(9Z,12Z)-octadecadienoyl-sn-glycero-3-phospho-1D-myo-inositol 5-phosphate + ADP + H(+). In terms of biological role, catalyzes the phosphorylation of phosphatidylinositol 4-phosphate (PtdIns(4)P/PI4P) to form phosphatidylinositol 4,5-bisphosphate (PtdIns(4,5)P2/PIP2), a lipid second messenger that regulates several cellular processes such as signal transduction, vesicle trafficking, actin cytoskeleton dynamics, cell adhesion, and cell motility. PtdIns(4,5)P2 can directly act as a second messenger or can be utilized as a precursor to generate other second messengers: inositol 1,4,5-trisphosphate (IP3), diacylglycerol (DAG) or phosphatidylinositol-3,4,5-trisphosphate (PtdIns(3,4,5)P3/PIP3). PIP5K1A-mediated phosphorylation of PtdIns(4)P is the predominant pathway for PtdIns(4,5)P2 synthesis. Can also use phosphatidylinositol (PtdIns) as substrate in vitro. Together with PIP5K1C, is required for phagocytosis, both enzymes regulating different types of actin remodeling at sequential steps. Promotes particle ingestion by activating the WAS GTPase-binding protein that induces Arp2/3 dependent actin polymerization at the nascent phagocytic cup. Together with PIP5K1B, is required, after stimulation by G-protein coupled receptors, for the synthesis of IP3 that will induce stable platelet adhesion. Recruited to the plasma membrane by the E-cadherin/beta-catenin complex where it provides the substrate PtdIns(4,5)P2 for the production of PtdIns(3,4,5)P3, IP3 and DAG, that will mobilize internal calcium and drive keratinocyte differentiation. Positively regulates insulin-induced translocation of SLC2A4 to the cell membrane in adipocytes. Together with PIP5K1C has a role during embryogenesis. Independently of its catalytic activity, is required for membrane ruffling formation, actin organization and focal adhesion formation during directional cell migration by controlling integrin-induced translocation of the small GTPase RAC1 to the plasma membrane. Also functions in the nucleus where it acts as an activator of TUT1 adenylyltransferase activity in nuclear speckles, thereby regulating mRNA polyadenylation of a select set of mRNAs. This Rattus norvegicus (Rat) protein is Phosphatidylinositol 4-phosphate 5-kinase type-1 alpha.